A 114-amino-acid chain; its full sequence is uncharacterized protein (114 aa).

The region spanning 6-114 (IFSKIIRREI…GGRPFSWPPG (109 aa)) is the HIT domain. The Histidine triad motif signature appears at 98–102 (HLHLH).

This is an uncharacterized protein from Synechocystis sp. (strain ATCC 27184 / PCC 6803 / Kazusa).